The chain runs to 431 residues: Mevalonate kinase (431 aa).

Residues lysine 13, serine 139, and 144–150 (GAGLGSS) each bind ATP. Mg(2+)-binding residues include serine 150 and glutamate 198. Aspartate 209 acts as the Proton acceptor in catalysis.

It belongs to the GHMP kinase family. Mevalonate kinase subfamily. Homodimer.

It is found in the cytoplasm. It localises to the cytosol. The enzyme catalyses (R)-mevalonate + ATP = (R)-5-phosphomevalonate + ADP + H(+). It functions in the pathway isoprenoid biosynthesis; isopentenyl diphosphate biosynthesis via mevalonate pathway; isopentenyl diphosphate from (R)-mevalonate: step 1/3. Mevalonate kinase; part of the second module of ergosterol biosynthesis pathway that includes the middle steps of the pathway. ERG12 converts mevalonate into 5-phosphomevalonate. The second module is carried out in the vacuole and involves the formation of farnesyl diphosphate, which is also an important intermediate in the biosynthesis of ubiquinone, dolichol, heme and prenylated proteins. Activity by the mevalonate kinase ERG12 first converts mevalonate into 5-phosphomevalonate. 5-phosphomevalonate is then further converted to 5-diphosphomevalonate by the phosphomevalonate kinase ERG8. The diphosphomevalonate decarboxylase MVD then produces isopentenyl diphosphate. The isopentenyl-diphosphate delta-isomerase IDI1 then catalyzes the 1,3-allylic rearrangement of the homoallylic substrate isopentenyl (IPP) to its highly electrophilic allylic isomer, dimethylallyl diphosphate (DMAPP). Finally the farnesyl diphosphate synthase ERG20 catalyzes the sequential condensation of isopentenyl pyrophosphate with dimethylallyl pyrophosphate, and then with the resultant geranylpyrophosphate to the ultimate product farnesyl pyrophosphate. This Candida albicans (strain SC5314 / ATCC MYA-2876) (Yeast) protein is Mevalonate kinase.